The chain runs to 146 residues: Lysozyme C (146 aa).

An N-terminal signal peptide occupies residues 1–16 (SGKYISWEDSCSYLQL). The 130-residue stretch at 17–146 (QKYERCELAK…LSQWTQGCKL (130 aa)) folds into the C-type lysozyme domain. 4 disulfides stabilise this stretch: cysteine 22/cysteine 144, cysteine 46/cysteine 132, cysteine 81/cysteine 97, and cysteine 93/cysteine 111. Catalysis depends on residues glutamate 51 and aspartate 69.

Belongs to the glycosyl hydrolase 22 family. In terms of tissue distribution, expressed by the skin glands.

The protein localises to the secreted. The catalysed reaction is Hydrolysis of (1-&gt;4)-beta-linkages between N-acetylmuramic acid and N-acetyl-D-glucosamine residues in a peptidoglycan and between N-acetyl-D-glucosamine residues in chitodextrins.. In terms of biological role, lysozymes have primarily a bacteriolytic function; those in tissues and body fluids are associated with the monocyte-macrophage system and enhance the activity of immunoagents. Has antibacterial activity against the Gram-positive bacterium S.aureus and against the Gram-negative bacterium E.coli with a MIC of 1 uM and 8 uM respectively. No antifungal activity against C.albicans. In Bufo gargarizans andrewsi (Andrew's toad), this protein is Lysozyme C.